The primary structure comprises 248 residues: 3-oxoacyl-[acyl-carrier-protein] reductase FabG (248 aa).

NADP(+) contacts are provided by residues 14–17 (GSTR), T39, 65–66 (NL), and N92. Residue S144 coordinates substrate. Y157 acts as the Proton acceptor in catalysis. NADP(+) is bound by residues 157–161 (YSTTK) and I190.

This sequence belongs to the short-chain dehydrogenases/reductases (SDR) family. Homotetramer.

The enzyme catalyses a (3R)-hydroxyacyl-[ACP] + NADP(+) = a 3-oxoacyl-[ACP] + NADPH + H(+). It functions in the pathway lipid metabolism; fatty acid biosynthesis. Functionally, catalyzes the NADPH-dependent reduction of beta-ketoacyl-ACP substrates to beta-hydroxyacyl-ACP products, the first reductive step in the elongation cycle of fatty acid biosynthesis. This chain is 3-oxoacyl-[acyl-carrier-protein] reductase FabG (fabG), found in Aquifex aeolicus (strain VF5).